Reading from the N-terminus, the 273-residue chain is uncharacterized protein (273 aa).

Residues 1-21 (MKILRWLFALVMLIATTEAMA) form the signal peptide.

To S.typhimurium YadU.

Part of the yfcOPQRSUV fimbrial operon. Could contribute to adhesion to various surfaces in specific environmental niches. Increases adhesion to eukaryotic T24 bladder epithelial cells in the absence of fim genes. This is an uncharacterized protein from Escherichia coli (strain K12).